The sequence spans 234 residues: C2H2-type zinc-finger transcription factor clz7 (234 aa).

2 disordered regions span residues 45–99 (RPEG…SRVD) and 118–154 (SAQP…NGTA). Composition is skewed to low complexity over residues 66–77 (SQSSNTSPTSES) and 140–154 (SSGT…NGTA). A C2H2-type 1; degenerate zinc finger spans residues 159-184 (NRCWDHGCNGKKFLNHSNLVRHRREN). The C2H2-type 2; degenerate zinc-finger motif lies at 191–223 (FICPMCGAYFSRSTARNQHLEKKSCNRVRRYSN).

This sequence belongs to the GLI C2H2-type zinc-finger protein family.

It is found in the nucleus. Its function is as follows. Transcription factor that probably regulates the expression of the gene cluster that mediates the biosynthesis of squalestatin S1 (SQS1, also known as zaragozic acid A), a heavily oxidized fungal polyketide that offers potent cholesterol lowering activity by targeting squalene synthase (SS). This chain is C2H2-type zinc-finger transcription factor clz7, found in Cochliobolus lunatus (Filamentous fungus).